The sequence spans 812 residues: Valine--tRNA ligase (812 aa).

Residues 46-56 (PTVSGQLHIGH) carry the 'HIGH' region motif. The 'KMSKS' region motif lies at 536-540 (KMSKS). Lys539 is an ATP binding site.

This sequence belongs to the class-I aminoacyl-tRNA synthetase family. ValS type 2 subfamily. In terms of assembly, monomer.

The protein localises to the cytoplasm. It carries out the reaction tRNA(Val) + L-valine + ATP = L-valyl-tRNA(Val) + AMP + diphosphate. Functionally, catalyzes the attachment of valine to tRNA(Val). As ValRS can inadvertently accommodate and process structurally similar amino acids such as threonine, to avoid such errors, it has a 'posttransfer' editing activity that hydrolyzes mischarged Thr-tRNA(Val) in a tRNA-dependent manner. The protein is Valine--tRNA ligase of Rickettsia akari (strain Hartford).